The chain runs to 454 residues: Protein disulfide-isomerase TMX3 (454 aa).

An N-terminal signal peptide occupies residues 1–24; that stretch reads MAAWKSWTALRLCATVVVLDMVVC. Residues 25 to 128 enclose the Thioredoxin domain; sequence KGFVEDLDES…KDDIIEFAHR (104 aa). At 25-375 the chain is on the lumenal side; it reads KGFVEDLDES…TIVSIFKSSP (351 aa). Catalysis depends on nucleophile residues Cys53 and Cys56. A disulfide bridge connects residues Cys53 and Cys56. Residues Asn258 and Asn313 are each glycosylated (N-linked (GlcNAc...) asparagine). Residues 376-396 form a helical membrane-spanning segment; that stretch reads LMGCFLFGLPLGVISIMCYGI. Residues 397 to 454 lie on the Cytoplasmic side of the membrane; sequence YTADTDGGYIEERYEVSKSENENQEQIEESKEQQEPSSGGSVVPTVQEPKDVLEKKKD. Residues 412–454 form a disordered region; sequence VSKSENENQEQIEESKEQQEPSSGGSVVPTVQEPKDVLEKKKD. Residues 444–454 show a composition bias toward basic and acidic residues; it reads EPKDVLEKKKD. The Di-lysine motif signature appears at 451–454; it reads KKKD.

Belongs to the protein disulfide isomerase family. N-glycosylated. In terms of tissue distribution, widely expressed. Expressed in brain, testis, lung, skin, kidney, uterus, bone, stomach, liver, prostate, placenta, eye and muscle.

The protein localises to the endoplasmic reticulum membrane. It carries out the reaction Catalyzes the rearrangement of -S-S- bonds in proteins.. Functionally, probable disulfide isomerase, which participates in the folding of proteins containing disulfide bonds. May act as a dithiol oxidase. Acts as a regulator of endoplasmic reticulum-mitochondria contact sites via its ability to regulate redox signals. In Homo sapiens (Human), this protein is Protein disulfide-isomerase TMX3 (TMX3).